A 220-amino-acid polypeptide reads, in one-letter code: NAD(P)H-hydrate epimerase (220 aa).

The YjeF N-terminal domain occupies 6–203 (ARHLTTLATG…SFDLPEALFH (198 aa)). (6S)-NADPHX is bound at residue 53–57 (HNGGV). Positions 54 and 116 each coordinate K(+). Residues 120–126 (GMRLEGP) and D149 each bind (6S)-NADPHX. T152 contacts K(+).

It belongs to the NnrE/AIBP family. Requires K(+) as cofactor.

It carries out the reaction (6R)-NADHX = (6S)-NADHX. The enzyme catalyses (6R)-NADPHX = (6S)-NADPHX. Functionally, catalyzes the epimerization of the S- and R-forms of NAD(P)HX, a damaged form of NAD(P)H that is a result of enzymatic or heat-dependent hydration. This is a prerequisite for the S-specific NAD(P)H-hydrate dehydratase to allow the repair of both epimers of NAD(P)HX. This is NAD(P)H-hydrate epimerase from Truepera radiovictrix (strain DSM 17093 / CIP 108686 / LMG 22925 / RQ-24).